The primary structure comprises 388 residues: Na(+)/H(+) antiporter NhaA (388 aa).

Residues 1 to 11 (MKHLHRFFSSD) lie on the Cytoplasmic side of the membrane. The chain crosses the membrane as a helical span at residues 12 to 31 (ASGGIILIIAAILAMIMANS). The Periplasmic segment spans residues 32–58 (GATSGWYHDFLETPVQLRVGSLEINKN). Residues 59-80 (MLLWINDALMAVFFLLVGLEVK) traverse the membrane as a helical segment. At 81–96 (RELMQGSLASLRQAAF) the chain is on the cytoplasmic side. Residues 97–116 (PVIAAIGGMIVPALLYLAFN) form a helical membrane-spanning segment. At 117–122 (YADPIT) the chain is on the periplasmic side. A helical transmembrane segment spans residues 123-130 (REGWAIPA). Residues 131-154 (ATDIAFALGVLALLGSRVPLVLKI) lie on the Cytoplasmic side of the membrane. Residues 155 to 176 (FLMALAIIDDLGAIIIIALFYT) form a helical membrane-spanning segment. Topologically, residues 177–180 (NDLS) are periplasmic. The helical transmembrane segment at 181–200 (MASLGVAAVAIAVLAVLNLC) threads the bilayer. Over 201-204 (GVRR) the chain is Cytoplasmic. Residues 205–222 (TGVYILVGVVLWTAVLKS) traverse the membrane as a helical segment. Residue G223 is a topological domain, periplasmic. A helical membrane pass occupies residues 224–236 (VHATLAGVIVGFF). Residues 237–253 (IPLKEKHGRSPAKRLEH) lie on the Cytoplasmic side of the membrane. Residues 254–272 (VLHPWVAYLILPLFAFANA) form a helical membrane-spanning segment. Residues 273 to 286 (GVSLQGVTLDGLTS) lie on the Periplasmic side of the membrane. A helical transmembrane segment spans residues 287-310 (ILPLGIIAGLLIGKPLGISLFCWL). At 311–339 (ALRLKLAHLPEGTTYQQIMVVGILCGIGF) the chain is on the cytoplasmic side. The chain crosses the membrane as a helical span at residues 340 to 350 (TMSIFIASLAF). The Periplasmic portion of the chain corresponds to 351–357 (GSVDPEL). Residues 358 to 380 (INWAKLGILVGSISSAVIGYSWL) traverse the membrane as a helical segment. Topologically, residues 381–388 (RVRLRPSV) are cytoplasmic.

It belongs to the NhaA Na(+)/H(+) (TC 2.A.33) antiporter family.

Its subcellular location is the cell inner membrane. It catalyses the reaction Na(+)(in) + 2 H(+)(out) = Na(+)(out) + 2 H(+)(in). Functionally, na(+)/H(+) antiporter that extrudes sodium in exchange for external protons. In Shigella flexneri, this protein is Na(+)/H(+) antiporter NhaA.